The sequence spans 148 residues: Ergosterol biosynthetic protein 28 (148 aa).

Residues 1–25 (MFSLQDVITTTKTTLAAMPKGYLPK) are Cytoplasmic-facing. A helical membrane pass occupies residues 26-46 (WLLFISIVSVFNSIQTYVSGL). Residues 47–92 (ELTRKVYERKPTETTHLSARTFGTWTFISCVIRFYGAMYLNEPHIF) lie on the Lumenal side of the membrane. A helical membrane pass occupies residues 93–113 (ELVFMSYMVALFHFGSELLIF). Over 114–120 (RTCKLGK) the chain is Cytoplasmic. A helical membrane pass occupies residues 121–136 (GFMGPLVVSTTSLVWM). The Lumenal segment spans residues 137-148 (YKQREYYTGVAW).

Belongs to the ERG28 family. In terms of assembly, heterotetramer of ERG25, ERG26, ERG27 and ERG28. ERG28 acts as a scaffold to tether ERG27 and other 4,4-demethylation-related enzymes, forming a demethylation enzyme complex, in the endoplasmic reticulum. Interacts with ERG25, ERG26 and ERG27. Also interacts with ERG1, ERG3, ERG5, ERG6 and ERG11.

It localises to the endoplasmic reticulum membrane. Part of the third module of ergosterol biosynthesis pathway that includes the late steps of the pathway. ERG28 has a role as a scaffold to help anchor the catalytic components of the C-4 demethylation complex ERG25, ERG26 and ERG27 to the endoplasmic reticulum. The third module or late pathway involves the ergosterol synthesis itself through consecutive reactions that mainly occur in the endoplasmic reticulum (ER) membrane. Firstly, the squalene synthase ERG9 catalyzes the condensation of 2 farnesyl pyrophosphate moieties to form squalene, which is the precursor of all steroids. Squalene synthase is crucial for balancing the incorporation of farnesyl diphosphate (FPP) into sterol and nonsterol isoprene synthesis. Secondly, the squalene epoxidase ERG1 catalyzes the stereospecific oxidation of squalene to (S)-2,3-epoxysqualene, which is considered to be a rate-limiting enzyme in steroid biosynthesis. Then, the lanosterol synthase ERG7 catalyzes the cyclization of (S)-2,3 oxidosqualene to lanosterol, a reaction that forms the sterol core. In the next steps, lanosterol is transformed to zymosterol through a complex process involving various demethylation, reduction and desaturation reactions. The lanosterol 14-alpha-demethylase ERG11 (also known as CYP51) catalyzes C14-demethylation of lanosterol to produce 4,4'-dimethyl cholesta-8,14,24-triene-3-beta-ol, which is critical for ergosterol biosynthesis. The C-14 reductase ERG24 reduces the C14=C15 double bond of 4,4-dimethyl-cholesta-8,14,24-trienol to produce 4,4-dimethyl-cholesta-8,24-dienol. 4,4-dimethyl-cholesta-8,24-dienol is substrate of the C-4 demethylation complex ERG25-ERG26-ERG27 in which ERG25 catalyzes the three-step monooxygenation required for the demethylation of 4,4-dimethyl and 4alpha-methylsterols, ERG26 catalyzes the oxidative decarboxylation that results in a reduction of the 3-beta-hydroxy group at the C-3 carbon to an oxo group, and ERG27 is responsible for the reduction of the keto group on the C-3. ERG28 has a role as a scaffold to help anchor ERG25, ERG26 and ERG27 to the endoplasmic reticulum and ERG29 regulates the activity of the iron-containing C4-methylsterol oxidase ERG25. Then, the sterol 24-C-methyltransferase ERG6 catalyzes the methyl transfer from S-adenosyl-methionine to the C-24 of zymosterol to form fecosterol. The C-8 sterol isomerase ERG2 catalyzes the reaction which results in unsaturation at C-7 in the B ring of sterols and thus converts fecosterol to episterol. The sterol-C5-desaturase ERG3 then catalyzes the introduction of a C-5 double bond in the B ring to produce 5-dehydroepisterol. The C-22 sterol desaturase ERG5 further converts 5-dehydroepisterol into ergosta-5,7,22,24(28)-tetraen-3beta-ol by forming the C-22(23) double bond in the sterol side chain. Finally, ergosta-5,7,22,24(28)-tetraen-3beta-ol is substrate of the C-24(28) sterol reductase ERG4 to produce ergosterol. The chain is Ergosterol biosynthetic protein 28 from Saccharomyces cerevisiae (strain ATCC 204508 / S288c) (Baker's yeast).